Reading from the N-terminus, the 103-residue chain is Nucleoid-associated protein Adeh_3636 (103 aa).

Belongs to the YbaB/EbfC family. As to quaternary structure, homodimer.

It is found in the cytoplasm. Its subcellular location is the nucleoid. Binds to DNA and alters its conformation. May be involved in regulation of gene expression, nucleoid organization and DNA protection. In Anaeromyxobacter dehalogenans (strain 2CP-C), this protein is Nucleoid-associated protein Adeh_3636.